A 126-amino-acid chain; its full sequence is Histone H2B 8 (126 aa).

Over residues 1-12 the composition is skewed to low complexity; that stretch reads MPEPAKSAPAPK. The segment at 1–35 is disordered; sequence MPEPAKSAPAPKKGSKKAVTKTQKKGDKKRRKTRK. N6-acetyllysine is present on residues Lys-6 and Lys-13. A compositionally biased stretch (basic residues) spans 13-34; it reads KGSKKAVTKTQKKGDKKRRKTR. Ser-15 bears the Phosphoserine mark. N6-acetyllysine is present on residues Lys-16 and Lys-21. A glycan (O-linked (GlcNAc) serine) is linked at Ser-113. Residue Lys-121 forms a Glycyl lysine isopeptide (Lys-Gly) (interchain with G-Cter in ubiquitin) linkage.

It belongs to the histone H2B family. In terms of assembly, the nucleosome is a histone octamer containing two molecules each of H2A, H2B, H3 and H4 assembled in one H3-H4 heterotetramer and two H2A-H2B heterodimers. The octamer wraps approximately 147 bp of DNA. Monoubiquitination of Lys-121 by the BRE1 gives a specific tag for epigenetic transcriptional activation and is also prerequisite for histone H3 'Lys-4' and 'Lys-79' methylation. Post-translationally, phosphorylated on Ser-15 during apoptosis; which facilitates apoptotic chromatin condensation. In terms of processing, glcNAcylation at Ser-113 promotes monoubiquitination of Lys-121. It fluctuates in response to extracellular glucose, and associates with transcribed genes.

It is found in the nucleus. Its subcellular location is the chromosome. Functionally, core component of nucleosome. Nucleosomes wrap and compact DNA into chromatin, limiting DNA accessibility to the cellular machineries which require DNA as a template. Histones thereby play a central role in transcription regulation, DNA repair, DNA replication and chromosomal stability. DNA accessibility is regulated via a complex set of post-translational modifications of histones, also called histone code, and nucleosome remodeling. The protein is Histone H2B 8 (H2B-VIII) of Gallus gallus (Chicken).